The following is a 154-amino-acid chain: Aspartate carbamoyltransferase regulatory chain (154 aa).

Residues cysteine 109, cysteine 114, cysteine 138, and cysteine 141 each contribute to the Zn(2+) site.

Belongs to the PyrI family. In terms of assembly, contains catalytic and regulatory chains. It depends on Zn(2+) as a cofactor.

In terms of biological role, involved in allosteric regulation of aspartate carbamoyltransferase. In Photobacterium profundum (strain SS9), this protein is Aspartate carbamoyltransferase regulatory chain.